The primary structure comprises 407 residues: Argininosuccinate synthase (407 aa).

10 to 18 (AYSGGLDTS) provides a ligand contact to ATP. The L-citrulline site is built by Y88 and S93. G118 serves as a coordination point for ATP. Residues T120, N124, and D125 each contribute to the L-aspartate site. N124 is a binding site for L-citrulline. R128, S177, S186, E263, and Y275 together coordinate L-citrulline.

The protein belongs to the argininosuccinate synthase family. Type 1 subfamily. Homotetramer.

The protein resides in the cytoplasm. It carries out the reaction L-citrulline + L-aspartate + ATP = 2-(N(omega)-L-arginino)succinate + AMP + diphosphate + H(+). Its pathway is amino-acid biosynthesis; L-arginine biosynthesis; L-arginine from L-ornithine and carbamoyl phosphate: step 2/3. This Clostridium botulinum (strain Eklund 17B / Type B) protein is Argininosuccinate synthase.